The primary structure comprises 226 residues: Membrane protein (226 aa).

The Virion surface portion of the chain corresponds to 1-11 (MSNGSIPVDEV). Residues 12–32 (IEHLRNWNFTWNIILTILLVV) form a helical membrane-spanning segment. At 33–41 (LQYGHYKYS) the chain is on the intravirion side. Residues 42-62 (VFLYGVKMAILWILWPLVLAL) form a helical membrane-spanning segment. The Virion surface segment spans residues 63–75 (SLFDAWASFQVNW). A helical transmembrane segment spans residues 76 to 96 (VFFAFSILMACITLMLWIMYF). The Intravirion portion of the chain corresponds to 97 to 226 (VNSIRLWRRT…TDSEKVLHLV (130 aa)). An interaction with N protein region spans residues 200–216 (RSKHGDYSAVSNPSAVL).

It belongs to the alphacoronaviruses M protein family. In terms of assembly, homomultimer. Interacts with envelope E protein in the budding compartment of the host cell, which is located between endoplasmic reticulum and the Golgi complex. Forms a complex with HE and S proteins. Interacts with nucleocapsid N protein. This interaction probably participates in RNA packaging into the virus.

It is found in the virion membrane. It localises to the host Golgi apparatus membrane. In terms of biological role, component of the viral envelope that plays a central role in virus morphogenesis and assembly via its interactions with other viral proteins. This is Membrane protein from Sus scrofa (Pig).